The chain runs to 1082 residues: Sodium/potassium exporting P-type ATPase 2 (1082 aa).

Over 1-75 (MSSINTNVAE…GANTLGDGDK (75 aa)) the chain is Cytoplasmic. A helical transmembrane segment spans residues 76 to 96 (ISLTKIIAHQVCNAMILVLII). Topologically, residues 97–98 (SM) are extracellular. A helical transmembrane segment spans residues 99-119 (VIALAIKDWISGGVIGFVVLI). The Cytoplasmic portion of the chain corresponds to 120 to 308 (NISVGFVQEY…VGTPLQRKLS (189 aa)). A helical membrane pass occupies residues 309–329 (WLAIFLFWGCRYFCNYCNGIP). Residues 330 to 336 (KNRVNKE) lie on the Extracellular side of the membrane. Residues 337 to 357 (VAIYAICVALSMIPSALIVVL) form a helical membrane-spanning segment. Over 358-807 (TITMAVGAQV…RMSSNIQKFV (450 aa)) the chain is Cytoplasmic. The active-site 4-aspartylphosphate intermediate is the Asp393. Mg(2+)-binding residues include Asp393 and Thr395. Thr395, Glu499, Lys552, Arg604, Thr664, Gly665, Asp666, Arg723, and Lys729 together coordinate ATP. Asp748 provides a ligand contact to Mg(2+). Asn751 contributes to the ATP binding site. The helical transmembrane segment at 808 to 828 (LQLLAENVAQALYLMVGLAFI) threads the bilayer. Topologically, residues 829-832 (DDSG) are extracellular. Residues 833–853 (LSVFPLSPVEVLWILVVTSCF) form a helical membrane-spanning segment. The Cytoplasmic portion of the chain corresponds to 854 to 884 (PAMDLGQERASDDILEESPNSTIFTWEVIID). Residues 885 to 905 (MIVYGFWMAVCCLVCFVIIVY) traverse the membrane as a helical segment. Residues 906–935 (GEGDPYLGVNCNKSSSSNSDVCELVFRGRS) are Extracellular-facing. A helical membrane pass occupies residues 936-956 (ASFATMTWCALILAWECIHPY). Residues 957–983 (NSLFYMRQDTDHPWWKQTVIDLWDNQF) lie on the Cytoplasmic side of the membrane. The chain crosses the membrane as a helical span at residues 984–1004 (LFWSVAIGFISVFPVVYIPVI). The Extracellular segment spans residues 1005-1007 (NTK). Residues 1008–1028 (VFLHGPIGYEWGLAVGFSILF) form a helical membrane-spanning segment. The Cytoplasmic portion of the chain corresponds to 1029–1082 (LAGSELWKWIKRIHKRKANKKAKNPEYELERSDPFKKYASFSRSNTMDRPELMV).

This sequence belongs to the cation transport ATPase (P-type) (TC 3.A.3) family. Type IID subfamily. Mg(2+) is required as a cofactor. Post-translationally, the active site is phosphorylated in presence of sodium or potassium and in conditions of higher pH. Not phosphorylated in presence of calcium ions.

Its subcellular location is the cell membrane. It carries out the reaction Na(+)(in) + ATP + H2O = Na(+)(out) + ADP + phosphate + H(+). It catalyses the reaction K(+)(in) + ATP + H2O = K(+)(out) + ADP + phosphate + H(+). In terms of biological role, catalyzes the hydrolysis of ATP coupled with the export of sodium and potassium from the cell. May be an inefficient sodium exporter. May transport other cations such as lithium. Sodium/potassium efflux ATPases are involved in salt tolerance and maintaining the membrane potential across the plasma membrane in high salinity (Na+) or alkaline (K+) environments. This Schwanniomyces occidentalis (Yeast) protein is Sodium/potassium exporting P-type ATPase 2.